The primary structure comprises 179 residues: Large ribosomal subunit protein uL5 (179 aa).

It belongs to the universal ribosomal protein uL5 family. As to quaternary structure, part of the 50S ribosomal subunit; part of the 5S rRNA/L5/L18/L25 subcomplex. Contacts the 5S rRNA and the P site tRNA. Forms a bridge to the 30S subunit in the 70S ribosome.

This is one of the proteins that bind and probably mediate the attachment of the 5S RNA into the large ribosomal subunit, where it forms part of the central protuberance. In the 70S ribosome it contacts protein S13 of the 30S subunit (bridge B1b), connecting the 2 subunits; this bridge is implicated in subunit movement. Contacts the P site tRNA; the 5S rRNA and some of its associated proteins might help stabilize positioning of ribosome-bound tRNAs. The protein is Large ribosomal subunit protein uL5 of Nitrosomonas europaea (strain ATCC 19718 / CIP 103999 / KCTC 2705 / NBRC 14298).